A 287-amino-acid chain; its full sequence is Elongation factor Ts (287 aa).

The interval 80–83 is involved in Mg(2+) ion dislocation from EF-Tu; sequence TDFL.

This sequence belongs to the EF-Ts family.

The protein resides in the cytoplasm. Functionally, associates with the EF-Tu.GDP complex and induces the exchange of GDP to GTP. It remains bound to the aminoacyl-tRNA.EF-Tu.GTP complex up to the GTP hydrolysis stage on the ribosome. The sequence is that of Elongation factor Ts from Ectopseudomonas mendocina (strain ymp) (Pseudomonas mendocina).